Here is a 357-residue protein sequence, read N- to C-terminus: tRNA/tmRNA (uracil-C(5))-methyltransferase (357 aa).

The S-adenosyl-L-methionine site is built by Gln180, Tyr209, Asn214, Glu230, and Asp290. Catalysis depends on Cys315, which acts as the Nucleophile. Glu349 (proton acceptor) is an active-site residue.

Belongs to the class I-like SAM-binding methyltransferase superfamily. RNA M5U methyltransferase family. TrmA subfamily.

It catalyses the reaction uridine(54) in tRNA + S-adenosyl-L-methionine = 5-methyluridine(54) in tRNA + S-adenosyl-L-homocysteine + H(+). The catalysed reaction is uridine(341) in tmRNA + S-adenosyl-L-methionine = 5-methyluridine(341) in tmRNA + S-adenosyl-L-homocysteine + H(+). Its function is as follows. Dual-specificity methyltransferase that catalyzes the formation of 5-methyluridine at position 54 (m5U54) in all tRNAs, and that of position 341 (m5U341) in tmRNA (transfer-mRNA). The chain is tRNA/tmRNA (uracil-C(5))-methyltransferase from Campylobacter jejuni subsp. jejuni serotype O:2 (strain ATCC 700819 / NCTC 11168).